Here is a 97-residue protein sequence, read N- to C-terminus: Co-chaperonin GroES (97 aa).

Belongs to the GroES chaperonin family. In terms of assembly, heptamer of 7 subunits arranged in a ring. Interacts with the chaperonin GroEL.

It localises to the cytoplasm. Functionally, together with the chaperonin GroEL, plays an essential role in assisting protein folding. The GroEL-GroES system forms a nano-cage that allows encapsulation of the non-native substrate proteins and provides a physical environment optimized to promote and accelerate protein folding. GroES binds to the apical surface of the GroEL ring, thereby capping the opening of the GroEL channel. This is Co-chaperonin GroES from Pectobacterium carotovorum subsp. carotovorum (strain PC1).